We begin with the raw amino-acid sequence, 517 residues long: V-type proton ATPase subunit B (517 aa).

S4 is subject to Phosphoserine. K14 participates in a covalent cross-link: Glycyl lysine isopeptide (Lys-Gly) (interchain with G-Cter in ubiquitin). At S137 the chain carries Phosphoserine. R381 is an ATP binding site. The disordered stretch occupies residues 487–517 (RARDDADEDEEDPDTRSSGKKKDASQEESLI). The segment covering 500–511 (DTRSSGKKKDAS) has biased composition (basic and acidic residues). Residues S503 and S504 each carry the phosphoserine modification. K508 is covalently cross-linked (Glycyl lysine isopeptide (Lys-Gly) (interchain with G-Cter in ubiquitin)). The residue at position 511 (S511) is a Phosphoserine; by ATM or ATR. At S515 the chain carries Phosphoserine.

The protein belongs to the ATPase alpha/beta chains family. As to quaternary structure, V-ATPase is a heteromultimeric enzyme composed of a peripheral catalytic V1 complex (components A to H) attached to an integral membrane V0 proton pore complex (components: a, c, c', c'', d, e, f and VOA1). Interacts with RAV1 and RAV2 components of the RAVE complex, which are essential for the stability and assembly of V-ATPase.

The protein resides in the vacuole membrane. Its function is as follows. Non-catalytic subunit of the V1 complex of vacuolar(H+)-ATPase (V-ATPase), a multisubunit enzyme composed of a peripheral complex (V1) that hydrolyzes ATP and a membrane integral complex (V0) that translocates protons. V-ATPase is responsible for acidifying and maintaining the pH of intracellular compartments. In Saccharomyces cerevisiae (strain ATCC 204508 / S288c) (Baker's yeast), this protein is V-type proton ATPase subunit B (VMA2).